Here is a 331-residue protein sequence, read N- to C-terminus: MINTSIPLVDLHRHLDGNVRVNTIWELGHQHGIALPADSLETLAPFVQIQGKETSLVAFLKKLDWMVAVLADLDAVKRVAYENVADAALSGLDYAELRFSPYYMAMNHKLPIEGVVEAVIDGVKAGLKDYQVKINLIGIMSRSFGQAACTQELEGLLAHKQHLVAMDLAGDELGFPGELFNEHFKRVRDAGLAITAHAGEAAGSQSMWQAIQELGATRIGHGVNAIHDPKLMEYLAKHRIGIESCPTSNLHTSTVSSYAEHPFRTFMDAGVLISLNTDDPGVSAIDIKHEYRIAKSELGLSDAELAQVQRNGVEMAFLSESERKALYAAKA.

Zn(2+)-binding residues include His12 and His14. Residues His14, Asp16, and Gly170 each coordinate substrate. Position 197 (His197) interacts with Zn(2+). The Proton donor role is filled by Glu200. Position 278 (Asp278) interacts with Zn(2+). A substrate-binding site is contributed by Asp279.

This sequence belongs to the metallo-dependent hydrolases superfamily. Adenosine and AMP deaminases family. Adenosine deaminase subfamily. Zn(2+) serves as cofactor.

The catalysed reaction is adenosine + H2O + H(+) = inosine + NH4(+). The enzyme catalyses 2'-deoxyadenosine + H2O + H(+) = 2'-deoxyinosine + NH4(+). Catalyzes the hydrolytic deamination of adenosine and 2-deoxyadenosine. This chain is Adenosine deaminase, found in Shewanella sp. (strain ANA-3).